The primary structure comprises 334 residues: Anthranilate phosphoribosyltransferase (334 aa).

Residues G79, 82–83 (GD), S87, 89–92 (NIST), 107–115 (KHGNRSISS), and S119 contribute to the 5-phospho-alpha-D-ribose 1-diphosphate site. Residue G79 participates in anthranilate binding. Mg(2+) is bound at residue S91. N110 provides a ligand contact to anthranilate. R165 is a binding site for anthranilate. Residues D224 and E225 each contribute to the Mg(2+) site.

This sequence belongs to the anthranilate phosphoribosyltransferase family. As to quaternary structure, homodimer. The cofactor is Mg(2+).

It carries out the reaction N-(5-phospho-beta-D-ribosyl)anthranilate + diphosphate = 5-phospho-alpha-D-ribose 1-diphosphate + anthranilate. It participates in amino-acid biosynthesis; L-tryptophan biosynthesis; L-tryptophan from chorismate: step 2/5. Catalyzes the transfer of the phosphoribosyl group of 5-phosphorylribose-1-pyrophosphate (PRPP) to anthranilate to yield N-(5'-phosphoribosyl)-anthranilate (PRA). The protein is Anthranilate phosphoribosyltransferase of Streptococcus pneumoniae (strain 70585).